Here is a 347-residue protein sequence, read N- to C-terminus: S-adenosylmethionine decarboxylase proenzyme (347 aa).

Active-site residues include Glu10 and Glu13. The Schiff-base intermediate with substrate; via pyruvic acid role is filled by Ser66. Ser66 bears the Pyruvic acid (Ser); by autocatalysis mark. Cys80 functions as the Proton donor; for catalytic activity in the catalytic mechanism. Active-site proton acceptor; for processing activity residues include Ser237 and His251.

Belongs to the eukaryotic AdoMetDC family. It depends on pyruvate as a cofactor. Is synthesized initially as an inactive proenzyme. Formation of the active enzyme involves a self-maturation process in which the active site pyruvoyl group is generated from an internal serine residue via an autocatalytic post-translational modification. Two non-identical subunits are generated from the proenzyme in this reaction, and the pyruvate is formed at the N-terminus of the alpha chain, which is derived from the carboxyl end of the proenzyme. The post-translation cleavage follows an unusual pathway, termed non-hydrolytic serinolysis, in which the side chain hydroxyl group of the serine supplies its oxygen atom to form the C-terminus of the beta chain, while the remainder of the serine residue undergoes an oxidative deamination to produce ammonia and the pyruvoyl group blocking the N-terminus of the alpha chain.

The catalysed reaction is S-adenosyl-L-methionine + H(+) = S-adenosyl 3-(methylsulfanyl)propylamine + CO2. Its pathway is amine and polyamine biosynthesis; S-adenosylmethioninamine biosynthesis; S-adenosylmethioninamine from S-adenosyl-L-methionine: step 1/1. In Drosophila melanogaster (Fruit fly), this protein is S-adenosylmethionine decarboxylase proenzyme (SamDC).